A 603-amino-acid polypeptide reads, in one-letter code: Leucine-rich repeat-containing protein 40 (603 aa).

The segment at 1 to 27 is disordered; that stretch reads MAAARRARAGDPRAGFRRAAEEQSPAV. LRR repeat units lie at residues 83 to 104, 106 to 127, 129 to 150, 152 to 173, 175 to 196, 198 to 219, 221 to 242, 244 to 265, 266 to 286, 290 to 311, 313 to 335, 336 to 357, 401 to 422, 427 to 449, 451 to 473, 474 to 495, 497 to 518, 520 to 541, 544 to 565, and 567 to 588; these read DLTKLILASNQLRCLSEDVRLL, ALTVLDVHDNQLTSLPSALGQL, NLQKLDVSHNKLKSIPEELLQL, HLKGLLLQHNELSHLPDGFGQL, SLEELDLSNNHLTDIPKSFALL, NLVRLNLACNQLKDLPADISAM, SLRQLDCTKNYLESVPSELASM, SLEQLYLRKNKLRSLPELPSCK, LLKELHAGENQIEILNAENLK, SLSVLELRDNKIKSVPDEITLL, KLERLDLANNDISRLPYTLGNLS, QLKFLALEGNPLRTIRRDLLQK, TLKLLDYSEKQVAVIPDDVFSA, PVTSVNFSKNQLTAIPPRIVELK, SVCDVNFGFNKISSVSLELCTLH, KLTHLDIRNNVLTSLPEEMEAL, RLQVINLSFNRFKVFPSVLYRM, ALETILLSNNQVGSIDPLQLKK, QLGTLDLQNNDLLQVPPELGNC, and TLRTLLLEGNPFRTPRAAILAK.

In Gallus gallus (Chicken), this protein is Leucine-rich repeat-containing protein 40 (LRRC40).